Reading from the N-terminus, the 420-residue chain is CinA-like protein (420 aa).

This sequence belongs to the CinA family.

This chain is CinA-like protein, found in Chloroherpeton thalassium (strain ATCC 35110 / GB-78).